A 353-amino-acid polypeptide reads, in one-letter code: Guanine nucleotide-binding protein subunit alpha (353 aa).

The interval 1 to 25 (MGCGMSTEDKEGKARNEEIENQLKR) is disordered. A lipid anchor (N-myristoyl glycine) is attached at G2. A lipid anchor (S-palmitoyl cysteine) is attached at C3. Over residues 7–25 (TEDKEGKARNEEIENQLKR) the composition is skewed to basic and acidic residues. The 322-residue stretch at 32 to 353 (NEIKMLLLGA…QENLRLCGLI (322 aa)) folds into the G-alpha domain. The G1 motif stretch occupies residues 35–48 (KMLLLGAGESGKST). GTP contacts are provided by E43, S44, G45, K46, S47, T48, D150, L175, T181, G203, N269, K270, D272, and A325. S47 provides a ligand contact to Mg(2+). Residues 173-181 (DVLRSRVKT) form a G2 motif region. A Mg(2+)-binding site is contributed by T181. Residues 196 to 205 (YRMFDVGGQR) are G3 motif. The interval 265 to 272 (ILFLNKID) is G4 motif. A G5 motif region spans residues 323–328 (TCATDT).

This sequence belongs to the G-alpha family. G(q) subfamily. G proteins are composed of 3 units; alpha, beta and gamma. The alpha chain contains the guanine nucleotide binding site. Mg(2+) is required as a cofactor.

Functionally, guanine nucleotide-binding proteins (G proteins) are involved as modulators or transducers in various transmembrane signaling systems. In Colletotrichum trifolii, this protein is Guanine nucleotide-binding protein subunit alpha (CTG1).